A 763-amino-acid chain; its full sequence is Phosphoglycerol transferase I (763 aa).

4 helical membrane-spanning segments follow: residues 4–19, 26–48, 76–98, and 110–132; these read LLSVALFLASVLIYAW, WWFAATLTVLGLFVILNITLYAS, YILPGIGIALALVAVFGALGWVL, and YSLLALLLALGSVDASPAFRQIT.

This sequence belongs to the OpgB family.

Its subcellular location is the cell inner membrane. The enzyme catalyses a phosphatidylglycerol + a membrane-derived-oligosaccharide D-glucose = a 1,2-diacyl-sn-glycerol + a membrane-derived-oligosaccharide 6-(glycerophospho)-D-glucose.. It participates in glycan metabolism; osmoregulated periplasmic glucan (OPG) biosynthesis. Transfers a phosphoglycerol residue from phosphatidylglycerol to the membrane-bound nascent glucan backbones. The sequence is that of Phosphoglycerol transferase I from Salmonella typhi.